The following is a 357-amino-acid chain: H-2 class I histocompatibility antigen, D-37 alpha chain (357 aa).

An N-terminal signal peptide occupies residues 1–20 (MLLFAHLLQLLVSATVPTQS). Residues 21–110 (SPHSLRYFTT…LLGYYNQSND (90 aa)) are alpha-1. The Extracellular portion of the chain corresponds to 21–304 (SPHSLRYFTT…EPPPSTVSNM (284 aa)). Asn106 carries an N-linked (GlcNAc...) asparagine glycan. The interval 111–202 (ESHTLQWMYG…RLGNETLQRS (92 aa)) is alpha-2. A disulfide bridge links Cys121 with Cys184. Asn196 carries an N-linked (GlcNAc...) asparagine glycan. Residues 203–294 (DPPKAHVTHH…GLPEPLTLRW (92 aa)) are alpha-3. The region spanning 205 to 293 (PKAHVTHHPR…EGLPEPLTLR (89 aa)) is the Ig-like C1-type domain. Cys223 and Cys279 are disulfide-bonded. Residues 295-304 (EPPPSTVSNM) form a connecting peptide region. The chain crosses the membrane as a helical span at residues 305-327 (VIIAVLVVLGAVIILGAVVAFVM). Residues 328-357 (KRRRHIGVKGCYAHVLGSKSFQTSDWPQKA) are Cytoplasmic-facing. Position 347 is a phosphoserine (Ser347).

This sequence belongs to the MHC class I family. In terms of assembly, heterodimer of an alpha chain and a beta chain (beta-2-microglobulin).

The protein localises to the membrane. Involved in the presentation of foreign antigens to the immune system. The polypeptide is H-2 class I histocompatibility antigen, D-37 alpha chain (H2-T23) (Mus musculus (Mouse)).